The chain runs to 208 residues: MRIRVKICGITRLEDAMTAVHHGVDAIGFILWPQSERYISPEEAGQIVRYLPPFVQAVGVFVNPDKSWVEVASAAAGLDLLQFHGDESPDFCSQFHLPYIKAVRVRDGLDLLQYAQCYEGSKGLLLDAYAEGKPGGTGHIFDWKLIPSGLSLPWILSGGLHSDNVVDAIEQTRPLAIDVSSGVEIANGIKDADKISVFMQGVRSCENV.

Belongs to the TrpF family.

The enzyme catalyses N-(5-phospho-beta-D-ribosyl)anthranilate = 1-(2-carboxyphenylamino)-1-deoxy-D-ribulose 5-phosphate. Its pathway is amino-acid biosynthesis; L-tryptophan biosynthesis; L-tryptophan from chorismate: step 3/5. This Nitrosomonas eutropha (strain DSM 101675 / C91 / Nm57) protein is N-(5'-phosphoribosyl)anthranilate isomerase.